The sequence spans 164 residues: Pleckstrin homology domain-containing family J member 1 (164 aa).

In terms of domain architecture, PH spans 15–108; sequence PAEMAAELGM…WMEALQRASY (94 aa).

This is Pleckstrin homology domain-containing family J member 1 (Plekhj1) from Mus musculus (Mouse).